Here is a 329-residue protein sequence, read N- to C-terminus: UDP-2,3-diacylglucosamine pyrophosphatase LpxG (329 aa).

A helical membrane pass occupies residues 2-24 (FVSVGITASLTTILAAPVLTWVW). A divalent metal cation is bound by residues aspartate 59, histidine 61, aspartate 91, asparagine 123, histidine 257, and histidine 259.

The protein belongs to the metallophosphoesterase superfamily. LpxG family. Requires Mn(2+) as cofactor.

It is found in the cell inner membrane. It catalyses the reaction UDP-2,3-diacyl-alpha-D-glucosamine + H2O = 2,3-diacyl-alpha-D-glucosaminyl 1-phosphate + UMP + 2 H(+). It functions in the pathway glycolipid biosynthesis; lipid IV(A) biosynthesis. In terms of biological role, hydrolyzes the pyrophosphate bond of UDP-2,3-diacylglucosamine to form 2,3-diacylglucosamine 1-phosphate (lipid X) and UMP by catalyzing the attack of water at the alpha-P atom. Involved in the biosynthesis of lipid A, a phosphorylated glycolipid that anchors the lipooligosaccharide (LOS) to the outer membrane of the cell. Can functionally complement lpxH deficiency in E.coli. Overexpression of LpxG results in toxic accumulation of lipid X and profoundly reduces the infectivity of C.trachomatis. Can utilize UDP-2-N,3-O-bis((3R)-3-hydroxytetradecanoyl)-alpha-D-glucosamine as substrate in vitro, but the substrate is likely UDP-2-N-((3R)-3-hydroxyicosanoyl),3-O-(tetradecanoyl)-alpha-D-glucosamine in vivo. This is UDP-2,3-diacylglucosamine pyrophosphatase LpxG from Chlamydia trachomatis serovar D (strain ATCC VR-885 / DSM 19411 / UW-3/Cx).